A 320-amino-acid chain; its full sequence is MKLKAMYSFLSDDLAAVEEELERAVQSEYGPLGEAALHLLQAGGKRIRPVFVLLAARFGQYDLERMKHVAVALELIHMASLVHDDVIDDADLRRGRPTIKAKWSNRFAMYTGDYLFARSLERMAELGNPRAHQVLAKTIVEVCRGEIEQIKDKYRFDQPLRTYLRRIRRKTALLIAASCQLGALAAGAPEPIVKRLYWFGHYVGMSFQITDDILDFTGTEEQLGKPAGSDLLQGNVTLPVLYALSDERVKAAIAAVGPETDVAEMAAVISAIKRTDAIERSYALSDRYLDKALHLLDGLPMNEARGLLRDLALYIGKRDY.

Residues lysine 45, arginine 48, and histidine 77 each coordinate isopentenyl diphosphate. Mg(2+)-binding residues include aspartate 84 and aspartate 88. An all-trans-hexaprenyl diphosphate-binding site is contributed by arginine 93. Arginine 94 serves as a coordination point for isopentenyl diphosphate. Positions 170, 171, and 208 each coordinate all-trans-hexaprenyl diphosphate.

The protein belongs to the FPP/GGPP synthase family. In terms of assembly, heterodimer of component I and II. Mg(2+) serves as cofactor.

It catalyses the reaction 4 isopentenyl diphosphate + (2E,6E)-farnesyl diphosphate = all-trans-heptaprenyl diphosphate + 4 diphosphate. Functionally, supplies heptaprenyl diphosphate, the precursor for the side chain of the isoprenoid quinone menaquinone-7 (MQ-7). The polypeptide is Heptaprenyl diphosphate synthase component 2 (hepT) (Geobacillus stearothermophilus (Bacillus stearothermophilus)).